The primary structure comprises 617 residues: 1-deoxy-D-xylulose-5-phosphate synthase (617 aa).

Thiamine diphosphate contacts are provided by residues histidine 76 and 117–119 (GHS). A Mg(2+)-binding site is contributed by aspartate 148. Thiamine diphosphate is bound by residues 149-150 (GA), asparagine 177, tyrosine 285, and glutamate 366. Residue asparagine 177 coordinates Mg(2+).

It belongs to the transketolase family. DXPS subfamily. As to quaternary structure, homodimer. It depends on Mg(2+) as a cofactor. Requires thiamine diphosphate as cofactor.

It carries out the reaction D-glyceraldehyde 3-phosphate + pyruvate + H(+) = 1-deoxy-D-xylulose 5-phosphate + CO2. Its pathway is metabolic intermediate biosynthesis; 1-deoxy-D-xylulose 5-phosphate biosynthesis; 1-deoxy-D-xylulose 5-phosphate from D-glyceraldehyde 3-phosphate and pyruvate: step 1/1. Functionally, catalyzes the acyloin condensation reaction between C atoms 2 and 3 of pyruvate and glyceraldehyde 3-phosphate to yield 1-deoxy-D-xylulose-5-phosphate (DXP). This is 1-deoxy-D-xylulose-5-phosphate synthase from Mannheimia succiniciproducens (strain KCTC 0769BP / MBEL55E).